We begin with the raw amino-acid sequence, 229 residues long: Cytochrome b6-f complex iron-sulfur subunit, chloroplastic (229 aa).

Residues 1–50 constitute a chloroplast transit peptide; it reads MASSSLSPATQLGSSRSALMAMSSGLFVKPTKMNHQMVRKEKIGLRISCQ. A helical transmembrane segment spans residues 68-90; the sequence is LNLLLLGALSLPTGYMLVPYATF. The 97-residue stretch at 115–211 folds into the Rieske domain; it reads AAEWLKTHGP…ADIDEAGKVL (97 aa). [2Fe-2S] cluster-binding residues include Cys157, His159, Cys175, and His178. Cys162 and Cys177 are joined by a disulfide. Ser196 bears the Phosphoserine mark.

Belongs to the Rieske iron-sulfur protein family. The 4 large subunits of the cytochrome b6-f complex are cytochrome b6, subunit IV (17 kDa polypeptide, petD), cytochrome f and the Rieske protein, while the 4 small subunits are petG, petL, petM and petN. The complex functions as a dimer. Interacts with PGRL1A. Component of a mitochondrial large protein complex that contains, at least, MIC60, DGS1, TOM40, TOM20 proteins, and petC/RISP. It depends on [2Fe-2S] cluster as a cofactor. In terms of tissue distribution, confined to photosynthetic tissues, with highest levels in flowers. In leaves, mostly localized in mesophyll cells. In stems, confined to the peripheral ring of chlorenchyma and adjoining groups of cells associated with the vascular bundles. In siliques, present in green wall of the fruit and in peduncle but not in the translucide white septum of the seeds.

The protein resides in the plastid. Its subcellular location is the chloroplast thylakoid membrane. It is found in the mitochondrion inner membrane. It carries out the reaction 2 oxidized [plastocyanin] + a plastoquinol + 2 H(+)(in) = 2 reduced [plastocyanin] + a plastoquinone + 4 H(+)(out). Essential protein for photoautotrophism. Confers resistance to photo-oxidative damages by contributing to the thermal dissipation of light energy and to lumenal acidification (increase of pH gradient). Component of the cytochrome b6-f complex, which mediates electron transfer between photosystem II (PSII) and photosystem I (PSI), cyclic electron flow around PSI, and state transitions. The polypeptide is Cytochrome b6-f complex iron-sulfur subunit, chloroplastic (Arabidopsis thaliana (Mouse-ear cress)).